The following is a 367-amino-acid chain: Queuine tRNA-ribosyltransferase (367 aa).

D91 functions as the Proton acceptor in the catalytic mechanism. Residues 91-95 (DSGGF), D145, Q188, and G215 contribute to the substrate site. D265 serves as the catalytic Nucleophile. Residues 270–274 (TRVAR) form an RNA binding; important for wobble base 34 recognition region. Zn(2+) is bound by residues C303, C305, C308, and H334.

This sequence belongs to the queuine tRNA-ribosyltransferase family. In terms of assembly, homodimer. Within each dimer, one monomer is responsible for RNA recognition and catalysis, while the other monomer binds to the replacement base PreQ1. Requires Zn(2+) as cofactor.

The catalysed reaction is 7-aminomethyl-7-carbaguanine + guanosine(34) in tRNA = 7-aminomethyl-7-carbaguanosine(34) in tRNA + guanine. Its pathway is tRNA modification; tRNA-queuosine biosynthesis. Catalyzes the base-exchange of a guanine (G) residue with the queuine precursor 7-aminomethyl-7-deazaguanine (PreQ1) at position 34 (anticodon wobble position) in tRNAs with GU(N) anticodons (tRNA-Asp, -Asn, -His and -Tyr). Catalysis occurs through a double-displacement mechanism. The nucleophile active site attacks the C1' of nucleotide 34 to detach the guanine base from the RNA, forming a covalent enzyme-RNA intermediate. The proton acceptor active site deprotonates the incoming PreQ1, allowing a nucleophilic attack on the C1' of the ribose to form the product. After dissociation, two additional enzymatic reactions on the tRNA convert PreQ1 to queuine (Q), resulting in the hypermodified nucleoside queuosine (7-(((4,5-cis-dihydroxy-2-cyclopenten-1-yl)amino)methyl)-7-deazaguanosine). The protein is Queuine tRNA-ribosyltransferase of Thermosipho africanus (strain TCF52B).